The primary structure comprises 289 residues: MLAMSHQTASSRLPEWARRTIGTASQVSTVEKIVKQRSLHTICEEGRCPNRAECYAQKTATFLLMGPVCTRACGFCQVAGGKALPLDPQEPEKVAEAVALLGLKYVVLTSVARDDLPDQGAGWFVRTMESIRARNCAVEIEVLTPDFRGEEACIATVVAARPVCFNHNIETVRRLQSYARRAATYARSLAVLAAVKRLDAEIFTKSGLMLGHGETREEVLETLLDLRKVGCDRVTLGQYLQPSKDHLPVHKYWTPAEFAELGAVARDLGFAHVRSGPLVRSSYHAGEPE.

Cys-43, Cys-48, Cys-54, Cys-69, Cys-73, Cys-76, and Ser-282 together coordinate [4Fe-4S] cluster. Residues 55-271 form the Radical SAM core domain; it reads YAQKTATFLL…GAVARDLGFA (217 aa).

This sequence belongs to the radical SAM superfamily. Lipoyl synthase family. The cofactor is [4Fe-4S] cluster.

The protein resides in the cytoplasm. It catalyses the reaction [[Fe-S] cluster scaffold protein carrying a second [4Fe-4S](2+) cluster] + N(6)-octanoyl-L-lysyl-[protein] + 2 oxidized [2Fe-2S]-[ferredoxin] + 2 S-adenosyl-L-methionine + 4 H(+) = [[Fe-S] cluster scaffold protein] + N(6)-[(R)-dihydrolipoyl]-L-lysyl-[protein] + 4 Fe(3+) + 2 hydrogen sulfide + 2 5'-deoxyadenosine + 2 L-methionine + 2 reduced [2Fe-2S]-[ferredoxin]. The protein operates within protein modification; protein lipoylation via endogenous pathway; protein N(6)-(lipoyl)lysine from octanoyl-[acyl-carrier-protein]: step 2/2. In terms of biological role, catalyzes the radical-mediated insertion of two sulfur atoms into the C-6 and C-8 positions of the octanoyl moiety bound to the lipoyl domains of lipoate-dependent enzymes, thereby converting the octanoylated domains into lipoylated derivatives. This Gloeobacter violaceus (strain ATCC 29082 / PCC 7421) protein is Lipoyl synthase 2.